Reading from the N-terminus, the 209-residue chain is Pyridoxal phosphate homeostasis protein (209 aa).

Lys-31 is modified (N6-(pyridoxal phosphate)lysine).

This sequence belongs to the pyridoxal phosphate-binding protein YggS/PROSC family.

Pyridoxal 5'-phosphate (PLP)-binding protein, which is involved in PLP homeostasis. The sequence is that of Pyridoxal phosphate homeostasis protein from Deinococcus radiodurans (strain ATCC 13939 / DSM 20539 / JCM 16871 / CCUG 27074 / LMG 4051 / NBRC 15346 / NCIMB 9279 / VKM B-1422 / R1).